We begin with the raw amino-acid sequence, 574 residues long: Glutamate--tRNA ligase (574 aa).

The 'HIGH' region signature appears at 109–119 (PNPDFVIHMGN).

It belongs to the class-I aminoacyl-tRNA synthetase family. Glutamate--tRNA ligase type 2 subfamily.

The protein resides in the cytoplasm. It carries out the reaction tRNA(Glu) + L-glutamate + ATP = L-glutamyl-tRNA(Glu) + AMP + diphosphate. Catalyzes the attachment of glutamate to tRNA(Glu) in a two-step reaction: glutamate is first activated by ATP to form Glu-AMP and then transferred to the acceptor end of tRNA(Glu). The sequence is that of Glutamate--tRNA ligase from Aeropyrum pernix (strain ATCC 700893 / DSM 11879 / JCM 9820 / NBRC 100138 / K1).